The primary structure comprises 357 residues: Peptide chain release factor 1 (357 aa).

Glutamine 233 bears the N5-methylglutamine mark.

It belongs to the prokaryotic/mitochondrial release factor family. In terms of processing, methylated by PrmC. Methylation increases the termination efficiency of RF1.

The protein resides in the cytoplasm. Its function is as follows. Peptide chain release factor 1 directs the termination of translation in response to the peptide chain termination codons UAG and UAA. The protein is Peptide chain release factor 1 of Leuconostoc citreum (strain KM20).